The sequence spans 368 residues: Polymerase delta-interacting protein 2 (368 aa).

A mitochondrion-targeting transit peptide spans 1–51; it reads MAACTARRALAVGSRWWSRSLTGARWPRPLCAAAGAGAFSPASTTTTRRHL. The 126-residue stretch at 235 to 360 folds into the ApaG domain; that stretch reads RETTENIRVT…FSLESNKDEK (126 aa). A Phosphothreonine modification is found at T292.

As to quaternary structure, interacts with PCNA and POLD2. Interacts with SSBP1. Interacts with PRIMPOL; leading to enhance DNA polymerase activity of PRIMPOL. Interacts with POLH. Interacts with POLD1; leading to stimulate DNA polymerase activity of POLD1.

Its subcellular location is the mitochondrion matrix. The protein resides in the nucleus. Its function is as follows. Involved in DNA damage tolerance by regulating translesion synthesis (TLS) of templates carrying DNA damage lesions such as 8oxoG and abasic sites. May act by stimulating activity of DNA polymerases involved in TLS, such as PRIMPOL and polymerase delta (POLD1). The chain is Polymerase delta-interacting protein 2 from Homo sapiens (Human).